A 476-amino-acid chain; its full sequence is MKPILPDYNSAGVLIIGDVMLDRYWYGPTGRISPEAPVPVVKVENNEERPGGAANVAMNIASLGGHAHIVGLTGEDEPAKVLTETLSALNVKCDFVALPDYPTITKLRVMSRGQQLIRLDFEDKFENTDATPVLSRMDAALPNVKAVIMSDYAKGSLEHVQAYIQKARAANIPVFIDPKGADFERYRGATLLTPNMKEFEDVVGKVKSDQELVEKALALVKEFDFEALLVTRSEHGMTLIRRGQEPFHLPTQAKEVYDVTGAGDTVISVLAASVAAGKSFEEACALANAAAGVVVGKLGTSTLSEIELAEAVHGSQDTDFGVISEKALIEAVKKARARGEKVVMTNGCFDILHAGHVSYLNHAAELGDRLIVAVNTDESVKRLKGPGRPVNPTDRRMAVLAGLGAVDWVVPFSEDTPQRLISEVLPSMLVKGGDYKPEEIAGGKEVIAAGGEVRVLNFEDGCSTSEIINAIKGGKG.

The segment at 1–318 is ribokinase; sequence MKPILPDYNS…AEAVHGSQDT (318 aa). 195-198 is an ATP binding site; sequence NMKE. The active site involves Asp264. Positions 344-476 are cytidylyltransferase; sequence MTNGCFDILH…IINAIKGGKG (133 aa).

In the N-terminal section; belongs to the carbohydrate kinase PfkB family. This sequence in the C-terminal section; belongs to the cytidylyltransferase family. Homodimer.

It catalyses the reaction D-glycero-beta-D-manno-heptose 7-phosphate + ATP = D-glycero-beta-D-manno-heptose 1,7-bisphosphate + ADP + H(+). The enzyme catalyses D-glycero-beta-D-manno-heptose 1-phosphate + ATP + H(+) = ADP-D-glycero-beta-D-manno-heptose + diphosphate. Its pathway is nucleotide-sugar biosynthesis; ADP-L-glycero-beta-D-manno-heptose biosynthesis; ADP-L-glycero-beta-D-manno-heptose from D-glycero-beta-D-manno-heptose 7-phosphate: step 1/4. It participates in nucleotide-sugar biosynthesis; ADP-L-glycero-beta-D-manno-heptose biosynthesis; ADP-L-glycero-beta-D-manno-heptose from D-glycero-beta-D-manno-heptose 7-phosphate: step 3/4. It functions in the pathway bacterial outer membrane biogenesis; LPS core biosynthesis. Catalyzes the phosphorylation of D-glycero-D-manno-heptose 7-phosphate at the C-1 position to selectively form D-glycero-beta-D-manno-heptose-1,7-bisphosphate. Functionally, catalyzes the ADP transfer from ATP to D-glycero-beta-D-manno-heptose 1-phosphate, yielding ADP-D-glycero-beta-D-manno-heptose. This Vibrio parahaemolyticus serotype O3:K6 (strain RIMD 2210633) protein is Bifunctional protein HldE.